A 753-amino-acid polypeptide reads, in one-letter code: Elongin-A2 (753 aa).

Positions 5–80 (STTLHAVEKL…ARWKKLVLVD (76 aa)) constitute a TFIIS N-terminal domain. Disordered stretches follow at residues 80-245 (DRNT…DWHS), 261-453 (ETPR…GPKT), and 477-497 (LSDS…SPKF). 2 stretches are compositionally biased toward basic and acidic residues: residues 147–157 (HSREPRAERKC) and 271–285 (ARDR…DKEG). Basic residues predominate over residues 306–317 (KRPQHSHSNKKR). The segment covering 333–348 (SPEEKEQLSNDRETQE) has biased composition (basic and acidic residues). Residues 366–377 (EVEEVDMAEEFE) are compositionally biased toward acidic residues. Over residues 409–428 (DKQRKANESKGTRESWDSAK) the composition is skewed to basic and acidic residues. Positions 500–659 (EAAFPGRRVN…TPYDTSRRQE (160 aa)) are activation domain. The tract at residues 528 to 537 (TLRQQCAQVL) is BC-box. Residues 528 to 537 (TLRQQCAQVL) are interacting with Elongin BC complex. Residues 650 to 735 (TPYDTSRRQE…KTRKQAAKKV (86 aa)) are disordered. Positions 654-663 (TSRRQEKSAG) are enriched in basic and acidic residues. A compositionally biased stretch (low complexity) spans 680-700 (GSSHTPSSQSSSGGGRDSSSS).

In terms of assembly, heterotrimer of an A (ELOA, ELOA2 or ELOA3P), ELOB and ELOC subunit. As to expression, specifically expressed in testis.

Its subcellular location is the nucleus. Functionally, SIII, also known as elongin, is a general transcription elongation factor that increases the RNA polymerase II transcription elongation past template-encoded arresting sites. Subunit A2 is transcriptionally active but its transcription activity is not enhanced by binding to the dimeric complex of the SIII regulatory subunits B and C (elongin BC complex). The chain is Elongin-A2 from Homo sapiens (Human).